The following is a 113-amino-acid chain: uncharacterized protein (113 aa).

The span at 1-19 (MDKKSAHRNPEDAKAGKYE) shows a compositional bias: basic and acidic residues. Positions 1-94 (MDKKSAHRNP…NKWRGKRKVS (94 aa)) are disordered. The span at 20 to 41 (GKHKRKKKRKQNQNQHRSRHRS) shows a compositional bias: basic residues. A compositionally biased stretch (low complexity) spans 52 to 66 (FPSSSSSSSGSQTDS). Residues 75-92 (KIKKKRREKTNKWRGKRK) are compositionally biased toward basic residues.

This is an uncharacterized protein from Macaca fascicularis (Crab-eating macaque).